We begin with the raw amino-acid sequence, 251 residues long: Small ribosomal subunit protein uS3 (251 aa).

Residues 39–109 (IRNYVLARLK…EVKIDVVEVI (71 aa)) enclose the KH type-2 domain. The segment covering 221-239 (EMKRMKDRRADSKSRPRDP) has biased composition (basic and acidic residues). The disordered stretch occupies residues 221–251 (EMKRMKDRRADSKSRPRDPRSKRRRSRTKRA). Residues 240-251 (RSKRRRSRTKRA) are compositionally biased toward basic residues.

This sequence belongs to the universal ribosomal protein uS3 family. In terms of assembly, part of the 30S ribosomal subunit. Forms a tight complex with proteins S10 and S14.

Binds the lower part of the 30S subunit head. Binds mRNA in the 70S ribosome, positioning it for translation. The chain is Small ribosomal subunit protein uS3 from Chlorobium limicola (strain DSM 245 / NBRC 103803 / 6330).